The chain runs to 348 residues: Phosphoribosylformylglycinamidine cyclo-ligase (348 aa).

It belongs to the AIR synthase family.

Its subcellular location is the cytoplasm. The enzyme catalyses 2-formamido-N(1)-(5-O-phospho-beta-D-ribosyl)acetamidine + ATP = 5-amino-1-(5-phospho-beta-D-ribosyl)imidazole + ADP + phosphate + H(+). The protein operates within purine metabolism; IMP biosynthesis via de novo pathway; 5-amino-1-(5-phospho-D-ribosyl)imidazole from N(2)-formyl-N(1)-(5-phospho-D-ribosyl)glycinamide: step 2/2. This chain is Phosphoribosylformylglycinamidine cyclo-ligase, found in Cereibacter sphaeroides (strain ATCC 17029 / ATH 2.4.9) (Rhodobacter sphaeroides).